A 218-amino-acid polypeptide reads, in one-letter code: Adenylate kinase (218 aa).

10–15 (GAGKGT) serves as a coordination point for ATP. Residues 30-59 (STGDMLRAAVKAGTPLGIAAKKIMDEGGLV) are NMP. AMP is bound by residues Thr-31, Arg-36, 57 to 59 (GLV), 85 to 88 (GFPR), and Gln-92. The tract at residues 122-159 (GRRVHPASGRTYHVKFNPPKVAGKDDLTGEELIQRDDD) is LID. Residues Arg-123 and 132–133 (TY) contribute to the ATP site. Positions 156 and 167 each coordinate AMP. Residue Gly-203 coordinates ATP.

This sequence belongs to the adenylate kinase family. Monomer.

It is found in the cytoplasm. The catalysed reaction is AMP + ATP = 2 ADP. It functions in the pathway purine metabolism; AMP biosynthesis via salvage pathway; AMP from ADP: step 1/1. Its function is as follows. Catalyzes the reversible transfer of the terminal phosphate group between ATP and AMP. Plays an important role in cellular energy homeostasis and in adenine nucleotide metabolism. In Janthinobacterium sp. (strain Marseille) (Minibacterium massiliensis), this protein is Adenylate kinase.